The chain runs to 344 residues: Phosphoribosylformylglycinamidine cyclo-ligase (344 aa).

It belongs to the AIR synthase family.

The protein resides in the cytoplasm. The catalysed reaction is 2-formamido-N(1)-(5-O-phospho-beta-D-ribosyl)acetamidine + ATP = 5-amino-1-(5-phospho-beta-D-ribosyl)imidazole + ADP + phosphate + H(+). The protein operates within purine metabolism; IMP biosynthesis via de novo pathway; 5-amino-1-(5-phospho-D-ribosyl)imidazole from N(2)-formyl-N(1)-(5-phospho-D-ribosyl)glycinamide: step 2/2. The sequence is that of Phosphoribosylformylglycinamidine cyclo-ligase from Exiguobacterium sibiricum (strain DSM 17290 / CCUG 55495 / CIP 109462 / JCM 13490 / 255-15).